The chain runs to 337 residues: Phosphate acyltransferase (337 aa).

It belongs to the PlsX family. Homodimer. Probably interacts with PlsY.

It is found in the cytoplasm. The enzyme catalyses a fatty acyl-[ACP] + phosphate = an acyl phosphate + holo-[ACP]. The protein operates within lipid metabolism; phospholipid metabolism. In terms of biological role, catalyzes the reversible formation of acyl-phosphate (acyl-PO(4)) from acyl-[acyl-carrier-protein] (acyl-ACP). This enzyme utilizes acyl-ACP as fatty acyl donor, but not acyl-CoA. This Listeria welshimeri serovar 6b (strain ATCC 35897 / DSM 20650 / CCUG 15529 / CIP 8149 / NCTC 11857 / SLCC 5334 / V8) protein is Phosphate acyltransferase.